The sequence spans 198 residues: Host transcription reprogramming factor 1 (198 aa).

The signal sequence occupies residues 1-19 (MQLSNFLSIWALVAMGATA). 2 disordered regions span residues 21-59 (PMPS…SYHS) and 71-198 (ERLA…PVQL). The C2H2-type zinc finger occupies 58–81 (HSCETCAAPFRTEERLAAHRQADH). Basic and acidic residues-rich tracts occupy residues 71–80 (ERLAAHRQAD), 104–128 (TSER…RSQE), and 167–177 (KLDKPTRKEQY).

The protein resides in the secreted. It localises to the host nucleus. Secreted effector that translocates into the nuclei of host cells to reprogram the expression of immunity-associated genes by binding to effector binding elements (EBEs) in rice. Binds the 5'-CAATCTTC-3' EBE of promoters from targeted rice genes and probably recruits a yet to be determined host repressor. Causes ambivalent immunity with increased susceptibility to the hemibiotrophic pathogens Magnaporthe oryzae and Xanthomonas oryzae pv. oryzae, but enhances resistance to Cochliobolus miyabeanus, a necrotrophic pathogen. In Pyricularia oryzae (strain 70-15 / ATCC MYA-4617 / FGSC 8958) (Rice blast fungus), this protein is Host transcription reprogramming factor 1.